We begin with the raw amino-acid sequence, 828 residues long: Putative alpha-1,3-mannosyltransferase MNN12 (828 aa).

Over 1 to 13 the chain is Cytoplasmic; that stretch reads MIEKLTIKRSRQK. The helical transmembrane segment at 14 to 34 threads the bilayer; sequence VIAYSVIIIWLMIVNIWLLNN. The Lumenal portion of the chain corresponds to 35–828; the sequence is YHLNSSTLTR…YYGDVWVGME (794 aa). An N-linked (GlcNAc...) asparagine glycan is attached at Asn-38. The segment at 80-104 is disordered; the sequence is HQEEDVPNSQSTDNSLIKPTSPAKN. The segment covering 86-103 has biased composition (polar residues); the sequence is PNSQSTDNSLIKPTSPAK. N-linked (GlcNAc...) asparagine glycosylation is found at Asn-247, Asn-437, and Asn-591.

It belongs to the MNN1/MNT family.

It localises to the golgi apparatus membrane. Its pathway is protein modification; protein glycosylation. Responsible for addition of the terminal mannose residues to the outer chain of core N-linked polysaccharides and to O-linked mannotriose. Implicated in late Golgi modifications. The protein is Putative alpha-1,3-mannosyltransferase MNN12 (MNN12) of Candida albicans (strain SC5314 / ATCC MYA-2876) (Yeast).